We begin with the raw amino-acid sequence, 486 residues long: ATP synthase subunit beta (486 aa).

Position 171–178 (171–178) interacts with ATP; it reads GGAGVGKT.

It belongs to the ATPase alpha/beta chains family. As to quaternary structure, F-type ATPases have 2 components, CF(1) - the catalytic core - and CF(0) - the membrane proton channel. CF(1) has five subunits: alpha(3), beta(3), gamma(1), delta(1), epsilon(1). CF(0) has three main subunits: a(1), b(2) and c(9-12). The alpha and beta chains form an alternating ring which encloses part of the gamma chain. CF(1) is attached to CF(0) by a central stalk formed by the gamma and epsilon chains, while a peripheral stalk is formed by the delta and b chains.

It localises to the cell membrane. It carries out the reaction ATP + H2O + 4 H(+)(in) = ADP + phosphate + 5 H(+)(out). Functionally, produces ATP from ADP in the presence of a proton gradient across the membrane. The catalytic sites are hosted primarily by the beta subunits. In Salinispora tropica (strain ATCC BAA-916 / DSM 44818 / JCM 13857 / NBRC 105044 / CNB-440), this protein is ATP synthase subunit beta.